The chain runs to 255 residues: HTH-type transcriptional regulator SkgA (255 aa).

The 70-residue stretch at 3-72 (VYTVKQMARL…LKDIQAALDQ (70 aa)) folds into the HTH merR-type domain. A DNA-binding region (H-T-H motif) is located at residues 6-25 (VKQMARLSGVSVRALHHYDA).

Regulates the induction of katG (catalase-peroxidase) in stationary phase. The protein is HTH-type transcriptional regulator SkgA (skgA) of Caulobacter vibrioides (strain ATCC 19089 / CIP 103742 / CB 15) (Caulobacter crescentus).